The sequence spans 221 residues: Eukaryotic translation initiation factor 3 subunit K (221 aa).

Residues 46-215 (YDLEANLACL…EKIEFDNLAP (170 aa)) form the PCI domain.

This sequence belongs to the eIF-3 subunit K family. In terms of assembly, component of the eukaryotic translation initiation factor 3 (eIF-3) complex.

It localises to the cytoplasm. In terms of biological role, component of the eukaryotic translation initiation factor 3 (eIF-3) complex, which is involved in protein synthesis of a specialized repertoire of mRNAs and, together with other initiation factors, stimulates binding of mRNA and methionyl-tRNAi to the 40S ribosome. The eIF-3 complex specifically targets and initiates translation of a subset of mRNAs involved in cell proliferation. The sequence is that of Eukaryotic translation initiation factor 3 subunit K from Anopheles gambiae (African malaria mosquito).